Consider the following 394-residue polypeptide: NADH-quinone oxidoreductase subunit D 2 (394 aa).

This sequence belongs to the complex I 49 kDa subunit family. NDH-1 is composed of 14 different subunits. Subunits NuoB, C, D, E, F, and G constitute the peripheral sector of the complex.

The protein resides in the cell membrane. It catalyses the reaction a quinone + NADH + 5 H(+)(in) = a quinol + NAD(+) + 4 H(+)(out). Its function is as follows. NDH-1 shuttles electrons from NADH, via FMN and iron-sulfur (Fe-S) centers, to quinones in the respiratory chain. The immediate electron acceptor for the enzyme in this species is believed to be a menaquinone. Couples the redox reaction to proton translocation (for every two electrons transferred, four hydrogen ions are translocated across the cytoplasmic membrane), and thus conserves the redox energy in a proton gradient. This Streptomyces griseus subsp. griseus (strain JCM 4626 / CBS 651.72 / NBRC 13350 / KCC S-0626 / ISP 5235) protein is NADH-quinone oxidoreductase subunit D 2.